The sequence spans 167 residues: Ribosome maturation factor RimM (167 aa).

The PRC barrel domain maps to D92 to L166.

The protein belongs to the RimM family. As to quaternary structure, binds ribosomal protein uS19.

Its subcellular location is the cytoplasm. Its function is as follows. An accessory protein needed during the final step in the assembly of 30S ribosomal subunit, possibly for assembly of the head region. Essential for efficient processing of 16S rRNA. May be needed both before and after RbfA during the maturation of 16S rRNA. It has affinity for free ribosomal 30S subunits but not for 70S ribosomes. This chain is Ribosome maturation factor RimM, found in Ruegeria pomeroyi (strain ATCC 700808 / DSM 15171 / DSS-3) (Silicibacter pomeroyi).